The primary structure comprises 484 residues: tRNA-2-methylthio-N(6)-dimethylallyladenosine synthase (484 aa).

The 118-residue stretch at 36–153 (GKLYIKTHGC…LPELIRARRE (118 aa)) folds into the MTTase N-terminal domain. The [4Fe-4S] cluster site is built by Cys45, Cys82, Cys116, Cys190, Cys194, and Cys197. The Radical SAM core domain occupies 176–415 (RAEGPSAFVS…HISAHAASIS (240 aa)). The 64-residue stretch at 416–479 (QSMVGSVQRV…SNSLRGRIQL (64 aa)) folds into the TRAM domain. Residues 428 to 450 (EGPSRRDPNELTGKSENMRPVNF) are disordered.

It belongs to the methylthiotransferase family. MiaB subfamily. Monomer. [4Fe-4S] cluster serves as cofactor.

The protein resides in the cytoplasm. It catalyses the reaction N(6)-dimethylallyladenosine(37) in tRNA + (sulfur carrier)-SH + AH2 + 2 S-adenosyl-L-methionine = 2-methylsulfanyl-N(6)-dimethylallyladenosine(37) in tRNA + (sulfur carrier)-H + 5'-deoxyadenosine + L-methionine + A + S-adenosyl-L-homocysteine + 2 H(+). Its function is as follows. Catalyzes the methylthiolation of N6-(dimethylallyl)adenosine (i(6)A), leading to the formation of 2-methylthio-N6-(dimethylallyl)adenosine (ms(2)i(6)A) at position 37 in tRNAs that read codons beginning with uridine. In Xanthomonas oryzae pv. oryzae (strain PXO99A), this protein is tRNA-2-methylthio-N(6)-dimethylallyladenosine synthase.